We begin with the raw amino-acid sequence, 396 residues long: Elongation factor Tu (396 aa).

Residues 11–205 form the tr-type G domain; sequence KPHVNIGTIG…TIDEYIPTPV (195 aa). Positions 20–27 are G1; that stretch reads GHVDHGKT. 20–27 provides a ligand contact to GTP; that stretch reads GHVDHGKT. T27 serves as a coordination point for Mg(2+). A G2 region spans residues 61–65; the sequence is GITIN. Residues 82–85 are G3; that stretch reads DAPG. GTP-binding positions include 82–86 and 137–140; these read DAPGH and NKTD. The tract at residues 137–140 is G4; that stretch reads NKTD. The G5 stretch occupies residues 175–177; it reads SAL.

Belongs to the TRAFAC class translation factor GTPase superfamily. Classic translation factor GTPase family. EF-Tu/EF-1A subfamily. Monomer.

Its subcellular location is the cytoplasm. It carries out the reaction GTP + H2O = GDP + phosphate + H(+). GTP hydrolase that promotes the GTP-dependent binding of aminoacyl-tRNA to the A-site of ribosomes during protein biosynthesis. In Lacticaseibacillus casei (strain BL23) (Lactobacillus casei), this protein is Elongation factor Tu.